Reading from the N-terminus, the 188-residue chain is dTTP/UTP pyrophosphatase (188 aa).

Aspartate 70 (proton acceptor) is an active-site residue.

Belongs to the Maf family. YhdE subfamily. It depends on a divalent metal cation as a cofactor.

Its subcellular location is the cytoplasm. It carries out the reaction dTTP + H2O = dTMP + diphosphate + H(+). The catalysed reaction is UTP + H2O = UMP + diphosphate + H(+). Functionally, nucleoside triphosphate pyrophosphatase that hydrolyzes dTTP and UTP. May have a dual role in cell division arrest and in preventing the incorporation of modified nucleotides into cellular nucleic acids. This Clostridium beijerinckii (strain ATCC 51743 / NCIMB 8052) (Clostridium acetobutylicum) protein is dTTP/UTP pyrophosphatase.